Consider the following 302-residue polypeptide: Cardiolipin synthase (CMP-forming) (302 aa).

The tract at residues 65-84 (PRTHCSGAGKAAPEPAAGGD) is disordered. A compositionally biased stretch (low complexity) spans 71 to 84 (GAGKAAPEPAAGGD). Transmembrane regions (helical) follow at residues 109–129 (IPNL…YLIL), 133–153 (FNVA…DGFI), 190–212 (IPVP…VFYV), 250–270 (LILV…SIYL), and 271–289 (QILW…YSYY).

Belongs to the CDP-alcohol phosphatidyltransferase class-I family. A divalent metal cation serves as cofactor.

It is found in the mitochondrion inner membrane. It carries out the reaction a CDP-1,2-diacyl-sn-glycerol + a 1,2-diacyl-sn-glycero-3-phospho-(1'-sn-glycerol) = a cardiolipin + CMP + H(+). Its function is as follows. Catalyzes the synthesis of cardiolipin (CL) (diphosphatidylglycerol) by specifically transferring a phosphatidyl group from CDP-diacylglycerol to phosphatidylglycerol (PG). CL is a key phospholipid in mitochondrial membranes and plays important roles in maintaining the functional integrity and dynamics of mitochondria under both optimal and stress conditions. The chain is Cardiolipin synthase (CMP-forming) (Crls1) from Rattus norvegicus (Rat).